The sequence spans 171 residues: Protein BTG1 (171 aa).

Position 159 is a phosphoserine (serine 159).

It belongs to the BTG family. In terms of assembly, interacts with CNOT7 and CNOT8.

In terms of biological role, anti-proliferative protein. The polypeptide is Protein BTG1 (BTG1) (Bos taurus (Bovine)).